Consider the following 560-residue polypeptide: Membrane protein insertase YidC (560 aa).

Residues 1-21 form a helical membrane-spanning segment; sequence MDIKRTILIAALAIVSYVMVL. Residues 42–66 form a disordered region; that stretch reads VAPGLPDGVPAANNGASADVPSANA. 5 consecutive transmembrane segments (helical) span residues 341 to 361, 367 to 387, 437 to 457, 468 to 488, and 515 to 535; these read LELT…FWLL, LLGN…GLFF, LGGC…YWVL, WMLW…PIIM, and PIIF…YWVV.

The protein belongs to the OXA1/ALB3/YidC family. Type 1 subfamily. As to quaternary structure, interacts with the Sec translocase complex via SecD. Specifically interacts with transmembrane segments of nascent integral membrane proteins during membrane integration.

It is found in the cell inner membrane. Its function is as follows. Required for the insertion and/or proper folding and/or complex formation of integral membrane proteins into the membrane. Involved in integration of membrane proteins that insert both dependently and independently of the Sec translocase complex, as well as at least some lipoproteins. Aids folding of multispanning membrane proteins. This Pseudomonas putida (strain W619) protein is Membrane protein insertase YidC.